The sequence spans 326 residues: Putative F-box protein At3g22710 (326 aa).

Residues 1–50 (MTMPDLPPDLVEEILSRVPATSVKKLRSTCTQWNAIFKDERFTEKHFSKA) form the F-box domain.

The polypeptide is Putative F-box protein At3g22710 (Arabidopsis thaliana (Mouse-ear cress)).